A 1358-amino-acid polypeptide reads, in one-letter code: Indole-3-acetaldehyde oxidase (1358 aa).

In terms of domain architecture, 2Fe-2S ferredoxin-type spans 11–98 (STVVLAVNGK…RCSVTTSEGI (88 aa)). Residues cysteine 50, cysteine 55, and cysteine 58 each contribute to the [2Fe-2S] cluster site. The 179-residue stretch at 241-419 (IAASGDGWYH…LSIFIPEWGS (179 aa)) folds into the FAD-binding PCMH-type domain. The segment at 532 to 559 (SSAPSNIDTPNGSYTHETGSNVDSPERH) is disordered. Polar residues predominate over residues 537 to 554 (NIDTPNGSYTHETGSNVD).

Belongs to the xanthine dehydrogenase family. As to quaternary structure, aldehyde oxidases (AO) are homodimers and heterodimers of AO subunits. It depends on [2Fe-2S] cluster as a cofactor. The cofactor is FAD. Mo-molybdopterin is required as a cofactor. As to expression, mostly expressed in roots, and, to a lower extent, in mesocotyl, leaves and coleoptile. Accumulates in apical region of maize coleoptiles (at protein level).

It is found in the cytoplasm. It catalyses the reaction indole-3-acetaldehyde + O2 + H2O = (indol-3-yl)acetate + H2O2 + H(+). Its activity is regulated as follows. Inhibited by 2-mercaptoethanol, p-chloromercuribenzoate, and iodoacetate. In terms of biological role, in higher plants aldehyde oxidases (AO) appear to be homo- and heterodimeric assemblies of AO subunits with probably different physiological functions. Involved in the biosynthesis of auxin from (indol-3-yl)acetaldehyde. Can also use indole-3-aldehyde and benzaldehyde as substrate. This is Indole-3-acetaldehyde oxidase (AO1) from Zea mays (Maize).